The primary structure comprises 432 residues: Adenylosuccinate synthetase (432 aa).

Residues Gly-13 to Lys-19 and Gly-41 to Thr-43 each bind GTP. The active-site Proton acceptor is the Asp-14. Mg(2+)-binding residues include Asp-14 and Gly-41. Residues Asp-14–Lys-17, Asn-39–His-42, Thr-130, Arg-144, Gln-225, Thr-240, and Arg-304 each bind IMP. The active-site Proton donor is the His-42. Ala-300–Arg-306 provides a ligand contact to substrate. GTP-binding positions include Arg-306, Lys-332–Asp-334, and Ser-415–Gly-417.

The protein belongs to the adenylosuccinate synthetase family. In terms of assembly, homodimer. Mg(2+) is required as a cofactor.

It localises to the cytoplasm. The catalysed reaction is IMP + L-aspartate + GTP = N(6)-(1,2-dicarboxyethyl)-AMP + GDP + phosphate + 2 H(+). It participates in purine metabolism; AMP biosynthesis via de novo pathway; AMP from IMP: step 1/2. Plays an important role in the de novo pathway of purine nucleotide biosynthesis. Catalyzes the first committed step in the biosynthesis of AMP from IMP. The polypeptide is Adenylosuccinate synthetase (Salmonella typhi).